We begin with the raw amino-acid sequence, 163 residues long: Phosphopantetheine adenylyltransferase (163 aa).

Ser9 contributes to the substrate binding site. ATP-binding positions include 9-10 (SF) and His17. 3 residues coordinate substrate: Lys41, Val78, and Arg92. ATP-binding positions include 93 to 95 (GLR), Glu103, and 128 to 134 (SRPITAT).

The protein belongs to the bacterial CoaD family. Homohexamer. Mg(2+) is required as a cofactor.

It localises to the cytoplasm. It carries out the reaction (R)-4'-phosphopantetheine + ATP + H(+) = 3'-dephospho-CoA + diphosphate. Its pathway is cofactor biosynthesis; coenzyme A biosynthesis; CoA from (R)-pantothenate: step 4/5. Functionally, reversibly transfers an adenylyl group from ATP to 4'-phosphopantetheine, yielding dephospho-CoA (dPCoA) and pyrophosphate. This is Phosphopantetheine adenylyltransferase from Rhizobium meliloti (strain 1021) (Ensifer meliloti).